We begin with the raw amino-acid sequence, 65 residues long: UPF0434 protein Mpe_A2486 (65 aa).

Belongs to the UPF0434 family.

In Methylibium petroleiphilum (strain ATCC BAA-1232 / LMG 22953 / PM1), this protein is UPF0434 protein Mpe_A2486.